We begin with the raw amino-acid sequence, 311 residues long: Phosphoglycerate mutase 2 (311 aa).

Residues 16 to 23 (RHGQSELN), 29 to 30 (CG), arginine 73, 126 to 129 (ERHY), lysine 137, 153 to 154 (RR), and 243 to 244 (GS) contribute to the substrate site. The Tele-phosphohistidine intermediate role is filled by histidine 17. The active-site Proton donor/acceptor is the glutamate 126.

This sequence belongs to the phosphoglycerate mutase family. BPG-dependent PGAM subfamily.

Its subcellular location is the cytoplasm. It carries out the reaction (2R)-2-phosphoglycerate = (2R)-3-phosphoglycerate. The protein operates within carbohydrate degradation; glycolysis; pyruvate from D-glyceraldehyde 3-phosphate: step 3/5. Functionally, could be non-functional. The polypeptide is Phosphoglycerate mutase 2 (GPM2) (Saccharomyces cerevisiae (strain ATCC 204508 / S288c) (Baker's yeast)).